Consider the following 183-residue polypeptide: Probable chorismate pyruvate-lyase (183 aa).

Substrate contacts are provided by arginine 79, leucine 115, and glutamate 168.

Belongs to the UbiC family.

It is found in the cytoplasm. It catalyses the reaction chorismate = 4-hydroxybenzoate + pyruvate. It participates in cofactor biosynthesis; ubiquinone biosynthesis. In terms of biological role, removes the pyruvyl group from chorismate, with concomitant aromatization of the ring, to provide 4-hydroxybenzoate (4HB) for the ubiquinone pathway. In Chromohalobacter salexigens (strain ATCC BAA-138 / DSM 3043 / CIP 106854 / NCIMB 13768 / 1H11), this protein is Probable chorismate pyruvate-lyase.